The primary structure comprises 338 residues: S-adenosylmethionine:tRNA ribosyltransferase-isomerase (338 aa).

It belongs to the QueA family. Monomer.

The protein localises to the cytoplasm. It catalyses the reaction 7-aminomethyl-7-carbaguanosine(34) in tRNA + S-adenosyl-L-methionine = epoxyqueuosine(34) in tRNA + adenine + L-methionine + 2 H(+). Its pathway is tRNA modification; tRNA-queuosine biosynthesis. Its function is as follows. Transfers and isomerizes the ribose moiety from AdoMet to the 7-aminomethyl group of 7-deazaguanine (preQ1-tRNA) to give epoxyqueuosine (oQ-tRNA). The sequence is that of S-adenosylmethionine:tRNA ribosyltransferase-isomerase from Francisella tularensis subsp. tularensis (strain WY96-3418).